Consider the following 227-residue polypeptide: Guanylate kinase (227 aa).

A Guanylate kinase-like domain is found at 21–199; it reads GNLFMVVAPS…ALAELECIVA (179 aa). 28-35 lines the ATP pocket; that stretch reads APSGAGKS.

Belongs to the guanylate kinase family.

It localises to the cytoplasm. It catalyses the reaction GMP + ATP = GDP + ADP. In terms of biological role, essential for recycling GMP and indirectly, cGMP. The sequence is that of Guanylate kinase from Burkholderia orbicola (strain AU 1054).